The sequence spans 945 residues: Cysteine-rich, acidic integral membrane protein (945 aa).

Residues M1–P20 form a disordered region. Residues M1–A23 form the signal peptide. At V24–L882 the chain is on the extracellular side. Residues N34 and N43 are each glycosylated (N-linked (GlcNAc...) asparagine). Repeat copies occupy residues D40–T51, D52–T63, D64–T75, D76–T87, D88–T99, D100–T111, D112–T123, D124–T135, D136–T147, D148–T159, D160–T171, D172–T183, D184–T195, D196–T207, D208–T219, D220–T231, D232–T243, D244–T255, D256–T267, D268–T279, D280–T291, D292–T303, D304–T315, D316–T327, D328–T339, D340–T351, D352–T363, D364–T375, D376–T387, D388–T399, D400–T411, D412–T423, D424–T435, D436–T447, D448–T459, D460–T471, D472–T483, D484–T495, D496–T507, D508–T519, D520–T531, D532–T543, D544–T555, D556–T567, D568–T579, D580–T591, D592–T603, D604–T615, D616–T627, D628–T639, D640–T651, D652–T663, D664–T675, D676–T687, D688–T699, D700–T711, D712–T723, D724–T735, D736–T747, D748–T759, D760–T771, D772–T783, D784–T795, D796–T807, D808–T819, and D820–T831. The tract at residues D40–T831 is 66 X 12 AA tandem repeats of D-D-C-[ND]-I-T-G-D-G-N-E-T. N-linked (GlcNAc...) asparagine glycosylation is found at N67, N79, N91, and N103. Residues N127, N139, and N151 are each glycosylated (N-linked (GlcNAc...) asparagine). N175 carries N-linked (GlcNAc...) asparagine glycosylation. N199, N211, N223, N235, N247, and N259 each carry an N-linked (GlcNAc...) asparagine glycan. N-linked (GlcNAc...) asparagine glycans are attached at residues N283, N295, N307, N319, N331, and N343. Residues N367, N379, N391, N403, and N415 are each glycosylated (N-linked (GlcNAc...) asparagine). N-linked (GlcNAc...) asparagine glycosylation occurs at N439. Residues N463, N475, N487, N499, N511, and N523 are each glycosylated (N-linked (GlcNAc...) asparagine). 5 N-linked (GlcNAc...) asparagine glycosylation sites follow: N547, N559, N571, N583, and N595. N619 carries an N-linked (GlcNAc...) asparagine glycan. 6 N-linked (GlcNAc...) asparagine glycosylation sites follow: N643, N655, N667, N679, N691, and N703. N-linked (GlcNAc...) asparagine glycosylation is found at N727, N739, N751, N763, and N775. Residue N799 is glycosylated (N-linked (GlcNAc...) asparagine). N823 is a glycosylation site (N-linked (GlcNAc...) asparagine). Residues L883 to L903 traverse the membrane as a helical segment. Topologically, residues G904 to P945 are cytoplasmic.

The protein localises to the flagellar pocket. Its subcellular location is the cell membrane. Supposed to function as cell surface receptor. Possibly involved in receptor-mediated endocytosis. This is Cysteine-rich, acidic integral membrane protein (CRAM) from Trypanosoma brucei brucei.